Consider the following 133-residue polypeptide: Large ribosomal subunit protein uL14m (133 aa).

Belongs to the universal ribosomal protein uL14 family. As to quaternary structure, probably part of the large ribosomal subunit.

It localises to the hydrogenosome. This Nyctotherus ovalis protein is Large ribosomal subunit protein uL14m (rpl14).